We begin with the raw amino-acid sequence, 602 residues long: MITKKDKPLNIYCPLVSIIIPVYNGANYMREAIDSALAQTYENIEIVVVNDGSKDNGETENVALSYGDKIRYFHKENGGCGSALNYGIKNMKGEYFSWLSHDDIYYPNKIEHQVNILNKLDNKDTIIYGGYELIDEKGSSLRYIKPDSVLPINKLNISLLPLLRGLIHGCSLLIPAKYFHEIGIFNEALPTTQDYDLWFKILRVAPIHFDESILIKSRFHSEQGSKKISNHNEECNVLWSSFLHELTEEEMIKMEDSPYLFLTRTATFLSNNTPYKKACDLANTMAKQVLHDTKVSVIIPVYNRINWAIEAIESVLIQTHKNFEILIIDDGSTDDISELTSICKKDKRIRYFHKKNEGPAAARNLGIKNAIGKYIAFLDSDDLFYKDKIEIQLKFMEENNFIFSHTSYQKINEKGKYIESVHSGFFSGNVFPQIIQTCPIAMPTVMGTLTLFQENLFPENIRSGEDCCLWISIASKNSIGGIDKELSKVRISGGTNTFMDPNKYSVGLINITSYVLNDPYLSKFSPFTINLLLAAVTQLRLLENKDYKKSNISFFNNNYVIQKIQTYCFVTKILILLTITSIRQEGIRATISRIQRWLRKHI.

The protein belongs to the glycosyltransferase 2 family.

This is an uncharacterized protein from Rickettsia felis (strain ATCC VR-1525 / URRWXCal2) (Rickettsia azadi).